Here is an 880-residue protein sequence, read N- to C-terminus: Alanine--tRNA ligase (880 aa).

Residues His568, His572, Cys670, and His674 each coordinate Zn(2+).

This sequence belongs to the class-II aminoacyl-tRNA synthetase family. It depends on Zn(2+) as a cofactor.

It localises to the cytoplasm. It carries out the reaction tRNA(Ala) + L-alanine + ATP = L-alanyl-tRNA(Ala) + AMP + diphosphate. In terms of biological role, catalyzes the attachment of alanine to tRNA(Ala) in a two-step reaction: alanine is first activated by ATP to form Ala-AMP and then transferred to the acceptor end of tRNA(Ala). Also edits incorrectly charged Ser-tRNA(Ala) and Gly-tRNA(Ala) via its editing domain. The polypeptide is Alanine--tRNA ligase (Enterococcus faecalis (strain ATCC 700802 / V583)).